The primary structure comprises 334 residues: tRNA dimethylallyltransferase (334 aa).

Glycine 22–threonine 29 lines the ATP pocket. Residue threonine 24 to threonine 29 participates in substrate binding.

This sequence belongs to the IPP transferase family. In terms of assembly, monomer. Mg(2+) is required as a cofactor.

The catalysed reaction is adenosine(37) in tRNA + dimethylallyl diphosphate = N(6)-dimethylallyladenosine(37) in tRNA + diphosphate. Functionally, catalyzes the transfer of a dimethylallyl group onto the adenine at position 37 in tRNAs that read codons beginning with uridine, leading to the formation of N6-(dimethylallyl)adenosine (i(6)A). The protein is tRNA dimethylallyltransferase of Rhodopirellula baltica (strain DSM 10527 / NCIMB 13988 / SH1).